A 428-amino-acid chain; its full sequence is Flap endonuclease 1-B (428 aa).

Positions methionine 1–arginine 132 are N-domain. Residue aspartate 34 coordinates Mg(2+). Arginine 98 contacts DNA. Mg(2+) is bound by residues aspartate 114, glutamate 186, glutamate 188, aspartate 207, and aspartate 209. Residues alanine 150–histidine 281 are I-domain. Position 186 (glutamate 186) interacts with DNA. 2 residues coordinate DNA: glycine 259 and aspartate 261. Aspartate 261 is a Mg(2+) binding site.

This sequence belongs to the XPG/RAD2 endonuclease family. FEN1 subfamily. In terms of assembly, interacts with PCNA. Three molecules of FEN1 bind to one PCNA trimer with each molecule binding to one PCNA monomer. PCNA stimulates the nuclease activity without altering cleavage specificity. It depends on Mg(2+) as a cofactor. Post-translationally, phosphorylated. Phosphorylation upon DNA damage induces relocalization to the nuclear plasma.

It is found in the nucleus. The protein localises to the nucleolus. Its subcellular location is the nucleoplasm. The protein resides in the mitochondrion. Structure-specific nuclease with 5'-flap endonuclease and 5'-3' exonuclease activities involved in DNA replication and repair. During DNA replication, cleaves the 5'-overhanging flap structure that is generated by displacement synthesis when DNA polymerase encounters the 5'-end of a downstream Okazaki fragment. It enters the flap from the 5'-end and then tracks to cleave the flap base, leaving a nick for ligation. Also involved in the long patch base excision repair (LP-BER) pathway, by cleaving within the apurinic/apyrimidinic (AP) site-terminated flap. Acts as a genome stabilization factor that prevents flaps from equilibrating into structures that lead to duplications and deletions. Also possesses 5'-3' exonuclease activity on nicked or gapped double-stranded DNA, and exhibits RNase H activity. Also involved in replication and repair of rDNA and in repairing mitochondrial DNA. This Sorghum bicolor (Sorghum) protein is Flap endonuclease 1-B.